Reading from the N-terminus, the 184-residue chain is Cathelicidin-related peptide Pt_CRAMP2 (184 aa).

Residues 1 to 22 form the signal peptide; sequence MDGFFWKTWLVVAALAIGGTSS. Residues 23-150 constitute a propeptide that is removed on maturation; that stretch reads LPHKPLTYEE…EDEKDQPRRV (128 aa). 2 disulfide bridges follow: Cys-81–Cys-92 and Cys-103–Cys-120. The span at 125 to 144 shows a compositional bias: acidic residues; sequence EDEEQNQEEEEEEEKEEDEK. Positions 125–147 are disordered; the sequence is EDEEQNQEEEEEEEKEEDEKDQP.

Belongs to the cathelicidin family. As to expression, expressed by the venom gland.

Its subcellular location is the secreted. The protein resides in the target cell membrane. Potent antimicrobial peptide against most of Gram-negative bacteria, some Gram-positive bacteria (Bacillus) and some fungi (C.albicans, P.pastoris, A.terreus, A.nidulans, and C.globosum). Adopts an amphipathic alpha helical conformation, that may allow to partition into the target membrane. No hemolytic and cytotoxic activities have been observed on mammalian cells. This Pseudonaja textilis (Eastern brown snake) protein is Cathelicidin-related peptide Pt_CRAMP2.